A 724-amino-acid polypeptide reads, in one-letter code: DNA ligase (724 aa).

Residues 44–48 (DADYD), 93–94 (SL), and Glu-127 contribute to the NAD(+) site. Lys-129 functions as the N6-AMP-lysine intermediate in the catalytic mechanism. Residues Arg-150, Glu-186, Lys-307, and Lys-331 each contribute to the NAD(+) site. Zn(2+) contacts are provided by Cys-437, Cys-440, Cys-461, and Cys-467. In terms of domain architecture, BRCT spans 646-724 (TEGSPVAGKT…EDEWLALIGG (79 aa)).

It belongs to the NAD-dependent DNA ligase family. LigA subfamily. Mg(2+) is required as a cofactor. Requires Mn(2+) as cofactor.

It carries out the reaction NAD(+) + (deoxyribonucleotide)n-3'-hydroxyl + 5'-phospho-(deoxyribonucleotide)m = (deoxyribonucleotide)n+m + AMP + beta-nicotinamide D-nucleotide.. In terms of biological role, DNA ligase that catalyzes the formation of phosphodiester linkages between 5'-phosphoryl and 3'-hydroxyl groups in double-stranded DNA using NAD as a coenzyme and as the energy source for the reaction. It is essential for DNA replication and repair of damaged DNA. This chain is DNA ligase, found in Agrobacterium fabrum (strain C58 / ATCC 33970) (Agrobacterium tumefaciens (strain C58)).